We begin with the raw amino-acid sequence, 142 residues long: MAKKVQAYVKLQVAAGMANPSPPVGPALGQQGVNIMEFCKAFNARTESLEKGLPIPVVITVYADRSFTFVTKTPPAAVLLKKAAGVKSGSGKPNKEKVGKVTLDQVRQIAETKAADMTGATIETKMKSIAGTARSMGLVVEE.

It belongs to the universal ribosomal protein uL11 family. As to quaternary structure, part of the ribosomal stalk of the 50S ribosomal subunit. Interacts with L10 and the large rRNA to form the base of the stalk. L10 forms an elongated spine to which L12 dimers bind in a sequential fashion forming a multimeric L10(L12)X complex. Post-translationally, one or more lysine residues are methylated.

In terms of biological role, forms part of the ribosomal stalk which helps the ribosome interact with GTP-bound translation factors. In Mannheimia succiniciproducens (strain KCTC 0769BP / MBEL55E), this protein is Large ribosomal subunit protein uL11.